A 162-amino-acid polypeptide reads, in one-letter code: CASP-like protein 1C1 (162 aa).

Residues 1–7 (MFSAKAR) lie on the Cytoplasmic side of the membrane. A helical membrane pass occupies residues 8-28 (WIVAVVLRVAAAGAAAVAAVL). The Extracellular segment spans residues 29 to 52 (MAMSHDEVIVYGMEVQAKFRYTPS). A helical membrane pass occupies residues 53–73 (LVFFVAANAAVSACSLVVLLV). Over 74–83 (PSSTSKLAAR) the chain is Cytoplasmic. The helical transmembrane segment at 84 to 104 (LLLMADVVLGMVLAGAFAAAG) threads the bilayer. The Extracellular portion of the chain corresponds to 105–135 (AMAELGKNGNSHAGWIAICVQVPLFCDRVRS). Residues 136 to 156 (ALVAGSATIVLYYLMLMYSIY) traverse the membrane as a helical segment. The Cytoplasmic segment spans residues 157 to 162 (TLPMFP).

It belongs to the Casparian strip membrane proteins (CASP) family. In terms of assembly, homodimer and heterodimers.

It is found in the cell membrane. In Oryza sativa subsp. japonica (Rice), this protein is CASP-like protein 1C1.